A 206-amino-acid polypeptide reads, in one-letter code: Outer-membrane lipoprotein carrier protein (206 aa).

The first 21 residues, 1–21 (MTRLLFVLVLSVCLLPVPVKA), serve as a signal peptide directing secretion.

This sequence belongs to the LolA family. Monomer.

It localises to the periplasm. In terms of biological role, participates in the translocation of lipoproteins from the inner membrane to the outer membrane. Only forms a complex with a lipoprotein if the residue after the N-terminal Cys is not an aspartate (The Asp acts as a targeting signal to indicate that the lipoprotein should stay in the inner membrane). The protein is Outer-membrane lipoprotein carrier protein of Nitrosomonas europaea (strain ATCC 19718 / CIP 103999 / KCTC 2705 / NBRC 14298).